Reading from the N-terminus, the 699-residue chain is UvrABC system protein B (699 aa).

The Helicase ATP-binding domain occupies 35 to 188 (ERINNGEKDV…DHLLRKFVSM (154 aa)). Residue 48–55 (GATGTGKS) coordinates ATP. Residues 101–124 (YYDYYQPEAYVAQTDTFIEKDSSI) carry the Beta-hairpin motif. The Helicase C-terminal domain maps to 438–604 (QIDDLLGEIR…PLRKKIADIT (167 aa)). Residues 654-689 (VGLIEQLTEQMHGAAAELQFEVAARIRDEVKELKRE) form the UVR domain.

Belongs to the UvrB family. In terms of assembly, forms a heterotetramer with UvrA during the search for lesions. Interacts with UvrC in an incision complex.

It is found in the cytoplasm. In terms of biological role, the UvrABC repair system catalyzes the recognition and processing of DNA lesions. A damage recognition complex composed of 2 UvrA and 2 UvrB subunits scans DNA for abnormalities. Upon binding of the UvrA(2)B(2) complex to a putative damaged site, the DNA wraps around one UvrB monomer. DNA wrap is dependent on ATP binding by UvrB and probably causes local melting of the DNA helix, facilitating insertion of UvrB beta-hairpin between the DNA strands. Then UvrB probes one DNA strand for the presence of a lesion. If a lesion is found the UvrA subunits dissociate and the UvrB-DNA preincision complex is formed. This complex is subsequently bound by UvrC and the second UvrB is released. If no lesion is found, the DNA wraps around the other UvrB subunit that will check the other stand for damage. This chain is UvrABC system protein B, found in Paenarthrobacter aurescens (strain TC1).